A 236-amino-acid chain; its full sequence is uncharacterized protein (236 aa).

An HTH gntR-type domain is found at 5–73 (QSTVENAKEK…DRKGWFVTQP (69 aa)). A DNA-binding region (H-T-H motif) is located at residues 33–52 (ERELGELLGIKRMTLRQALL).

This is an uncharacterized protein from Escherichia coli O157:H7.